We begin with the raw amino-acid sequence, 536 residues long: MAAAAAAMATATSATAAPPLRIRDAARRTRRRGHVRCAVASGAAEAPAAPGARVSADCVVVGGGISGLCTAQALATKHGVGDVLVTEARARPGGNITTAERAGEGYLWEEGPNSFQPSDPVLTMAVDSGLKDDLVFGDPNAPRFVLWEGKLRPVPSKPGDLPFFDLMSIPGKLRAGLGALGVRAPPPGREESVEDFVRRNLGAEVFERLIEPFCSGVYAGDPSKLSMKAAFGKVWRLEDTGGSIIGGTIKTIQERGKNPKPPRDPRLPTPKGQTVASFRKGLTMLPDAITSRLGSKVKLSWKLTSITKSDNKGYALVYETPEGVVSVQAKTVVMTIPSYVASDILRPLSSDAADALSIFYYPPVAAVTVSYPKEAIRKECLIDGELQGFGQLHPRSQGVETLGTIYSSSLFPNRAPAGRVLLLNYIGGSTNTGIVSKTESELVEAVDRDLRKMLINPKAVDPLVLGVRVWPQAIPQFLIGHLDHLEAAKSALGKGGYDGLFLGGNYVAGVALGRCVEGAYESASQISDYLTKYAYK.

The N-terminal 36 residues, 1-36 (MAAAAAAMATATSATAAPPLRIRDAARRTRRRGHVR), are a transit peptide targeting the chloroplast. FAD-binding positions include 62-67 (GGGISG), 87-88 (EA), and 111-114 (GPNS). The disordered stretch occupies residues 248–272 (TIKTIQERGKNPKPPRDPRLPTPKG). Residues 252–266 (IQERGKNPKPPRDPR) are compositionally biased toward basic and acidic residues. 510–512 (VAL) is a binding site for FAD.

This sequence belongs to the protoporphyrinogen/coproporphyrinogen oxidase family. Protoporphyrinogen oxidase subfamily. It depends on FAD as a cofactor.

It localises to the plastid. The protein resides in the chloroplast. The catalysed reaction is protoporphyrinogen IX + 3 O2 = protoporphyrin IX + 3 H2O2. The protein operates within porphyrin-containing compound metabolism; protoporphyrin-IX biosynthesis; protoporphyrin-IX from protoporphyrinogen-IX: step 1/1. Its pathway is porphyrin-containing compound metabolism; chlorophyll biosynthesis. Catalyzes the 6-electron oxidation of protoporphyrinogen-IX to form protoporphyrin-IX. In Oryza sativa subsp. japonica (Rice), this protein is Protoporphyrinogen oxidase, chloroplastic (PPOX1).